Consider the following 284-residue polypeptide: Shikimate dehydrogenase (NADP(+)) (284 aa).

Shikimate contacts are provided by residues 20–22 and serine 67; that span reads SIS. Lysine 71 functions as the Proton acceptor in the catalytic mechanism. Residue aspartate 83 coordinates NADP(+). Residues asparagine 92 and aspartate 107 each coordinate shikimate. Residues 129–133 and isoleucine 227 each bind NADP(+); that span reads GAGGA. Tyrosine 229 contributes to the shikimate binding site. Glycine 250 is a binding site for NADP(+).

It belongs to the shikimate dehydrogenase family. As to quaternary structure, homodimer.

The catalysed reaction is shikimate + NADP(+) = 3-dehydroshikimate + NADPH + H(+). It participates in metabolic intermediate biosynthesis; chorismate biosynthesis; chorismate from D-erythrose 4-phosphate and phosphoenolpyruvate: step 4/7. Involved in the biosynthesis of the chorismate, which leads to the biosynthesis of aromatic amino acids. Catalyzes the reversible NADPH linked reduction of 3-dehydroshikimate (DHSA) to yield shikimate (SA). This Streptococcus pneumoniae (strain P1031) protein is Shikimate dehydrogenase (NADP(+)).